We begin with the raw amino-acid sequence, 583 residues long: Proline--tRNA ligase (583 aa).

It belongs to the class-II aminoacyl-tRNA synthetase family. ProS type 1 subfamily. As to quaternary structure, homodimer.

It localises to the cytoplasm. It catalyses the reaction tRNA(Pro) + L-proline + ATP = L-prolyl-tRNA(Pro) + AMP + diphosphate. Functionally, catalyzes the attachment of proline to tRNA(Pro) in a two-step reaction: proline is first activated by ATP to form Pro-AMP and then transferred to the acceptor end of tRNA(Pro). As ProRS can inadvertently accommodate and process non-cognate amino acids such as alanine and cysteine, to avoid such errors it has two additional distinct editing activities against alanine. One activity is designated as 'pretransfer' editing and involves the tRNA(Pro)-independent hydrolysis of activated Ala-AMP. The other activity is designated 'posttransfer' editing and involves deacylation of mischarged Ala-tRNA(Pro). The misacylated Cys-tRNA(Pro) is not edited by ProRS. This Aromatoleum aromaticum (strain DSM 19018 / LMG 30748 / EbN1) (Azoarcus sp. (strain EbN1)) protein is Proline--tRNA ligase.